Reading from the N-terminus, the 102-residue chain is Keratinocyte differentiation-associated protein (102 aa).

Residues 1-22 (MKIPILPVVALLSLLALHAVQG) form the signal peptide.

As to expression, expression restricted to suprabasal keratinocytes of the epidermis.

Its subcellular location is the secreted. Its function is as follows. May act as a soluble regulator of keratinocyte differentiation. May play an important role in embryonic skin morphogenesis. In Mus musculus (Mouse), this protein is Keratinocyte differentiation-associated protein.